We begin with the raw amino-acid sequence, 294 residues long: uncharacterized protein (294 aa).

Catalysis depends on charge relay system residues threonine 43 and tyrosine 104. Tyrosine 130 (proton donor) is an active-site residue. The Schiff-base intermediate with substrate role is filled by lysine 158.

It belongs to the DapA family. Homotetramer.

Its subcellular location is the cytoplasm. This is an uncharacterized protein from Pyrococcus abyssi (strain GE5 / Orsay).